Here is a 385-residue protein sequence, read N- to C-terminus: Transcription factor-like protein DPB (385 aa).

Disordered regions lie at residues 1 to 53 (MTTT…EQTI) and 71 to 102 (DIQGDDAGSQGASGVKKKKRGQRAAGPDKTGR). Residues 22-31 (PSTRSWGTAV) show a composition bias toward polar residues. Residues 32–53 (SGQSVSTSGSMGSPSSRSEQTI) are compositionally biased toward low complexity. A DNA-binding region spans residues 101 to 184 (GRGLRQFSMK…KKEIQWRGLP (84 aa)). The DEF box motif lies at 150 to 184 (DEKNIRRRVYDALNVLMAMDIISKDKKEIQWRGLP). The stretch at 185-234 (RTSLSDIEELKNERLSLRNRIEKKTAYSQELEEQYVGLQNLIQRNEHLYS) forms a coiled coil. The segment at 296–385 (PPQQPNGRNN…IMNSSMKPEN (90 aa)) is disordered. The segment covering 300-327 (PNGRNNSQLVCHNFTPENPNKGPSTGPT) has biased composition (polar residues). The segment covering 336 to 349 (HLQSQQHQQHSQLQ) has biased composition (low complexity). Residues 355–364 (ETNNVTSSAD) are compositionally biased toward polar residues.

This sequence belongs to the E2F/DP family. Heterodimer with non-phosphorylated E2FC. No interaction with phosphorylated E2FC. Interacts preferentially with E2FC, but also with E2FA and E2FB. Interacts with SKP2A. Targeted for proteasomal degradation by the SCF(SKP2A) E3 ubiquitin ligase complex. Post-translationally, phosphorylated. Ubiquitous.

The protein localises to the nucleus. It is found in the cytoplasm. Involved in the regulation of the G1/S transition. Increases the DNA binding activity of E2F proteins after heterodimerization. The complex DPB/E2FC restricts cell division and lateral root initiation and may function as a negative regulator of E2F-regulated genes. The interaction with SKP2A is controlled by auxin. The chain is Transcription factor-like protein DPB (DPB) from Arabidopsis thaliana (Mouse-ear cress).